Reading from the N-terminus, the 307-residue chain is D-alanine--D-alanine ligase (307 aa).

An ATP-grasp domain is found at 101 to 301 (KDVLRAAGVP…FGELVRWMVE (201 aa)). 128–182 (MTPPYVVKPLGEGSSFGVIIVRADQTHPPQELTRDDWAYGDLVLVERFVAGRELT) serves as a coordination point for ATP. Residues aspartate 251, glutamate 268, and asparagine 270 each coordinate Mg(2+).

The protein belongs to the D-alanine--D-alanine ligase family. The cofactor is Mg(2+). Mn(2+) is required as a cofactor.

It localises to the cytoplasm. It catalyses the reaction 2 D-alanine + ATP = D-alanyl-D-alanine + ADP + phosphate + H(+). The protein operates within cell wall biogenesis; peptidoglycan biosynthesis. In terms of biological role, cell wall formation. This Methylocella silvestris (strain DSM 15510 / CIP 108128 / LMG 27833 / NCIMB 13906 / BL2) protein is D-alanine--D-alanine ligase.